A 335-amino-acid polypeptide reads, in one-letter code: Galactosylgalactosylxylosylprotein 3-beta-glucuronosyltransferase 3 (335 aa).

Topologically, residues 1–7 (MKLKLKN) are cytoplasmic. Residues 8 to 28 (VFLAYFLVSIAGLLYALVQLG) traverse the membrane as a helical; Signal-anchor for type II membrane protein segment. The Lumenal segment spans residues 29–335 (QPCDCLPPLR…GRGSDPAIEV (307 aa)). Residues 82 to 84 (PTY), aspartate 113, arginine 156, arginine 161, and 194 to 196 (DDD) each bind UDP-alpha-D-glucuronate. Aspartate 196 is a Mn(2+) binding site. The segment at 243–252 (WEPSRPFPVD) is interaction with galactose moiety of substrate glycoprotein. The Proton donor/acceptor role is filled by glutamate 281. A glycan (N-linked (GlcNAc...) asparagine) is linked at asparagine 300. UDP-alpha-D-glucuronate is bound at residue 308–310 (HTR). Residues 312 to 322 (EKPKMKQEEQL) show a composition bias toward basic and acidic residues. The tract at residues 312-335 (EKPKMKQEEQLQRQGRGSDPAIEV) is disordered.

This sequence belongs to the glycosyltransferase 43 family. As to quaternary structure, homodimer; disulfide-linked. Interacts with PXYLP1; the interaction increases the 2-phosphoxylose phosphatase activity of PXYLP1 during completion of linkage region formation in a B3GAT3-mediated manner. Requires Mn(2+) as cofactor. N-glycosylated. As to expression, ubiquitous (but weakly expressed in all tissues examined).

It is found in the golgi apparatus membrane. The protein resides in the golgi apparatus. Its subcellular location is the cis-Golgi network. The enzyme catalyses 3-O-(beta-D-galactosyl-(1-&gt;3)-beta-D-galactosyl-(1-&gt;4)-beta-D-xylosyl)-L-seryl-[protein] + UDP-alpha-D-glucuronate = 3-O-(beta-D-GlcA-(1-&gt;3)-beta-D-Gal-(1-&gt;3)-beta-D-Gal-(1-&gt;4)-beta-D-Xyl)-L-seryl-[protein] + UDP + H(+). Its pathway is protein modification; protein glycosylation. Inhibited by EDTA. Its function is as follows. Glycosaminoglycans biosynthesis. Involved in forming the linkage tetrasaccharide present in heparan sulfate and chondroitin sulfate. Transfers a glucuronic acid moiety from the uridine diphosphate-glucuronic acid (UDP-GlcUA) to the common linkage region trisaccharide Gal-beta-1,3-Gal-beta-1,4-Xyl covalently bound to a Ser residue at the glycosaminylglycan attachment site of proteoglycans. Can also play a role in the biosynthesis of l2/HNK-1 carbohydrate epitope on glycoproteins. Shows strict specificity for Gal-beta-1,3-Gal-beta-1,4-Xyl, exhibiting negligible incorporation into other galactoside substrates including Galbeta1-3Gal beta1-O-benzyl, Galbeta1-4GlcNAc and Galbeta1-4Glc. Stimulates 2-phosphoxylose phosphatase activity of PXYLP1 in presence of uridine diphosphate-glucuronic acid (UDP-GlcUA) during completion of linkage region formation. The polypeptide is Galactosylgalactosylxylosylprotein 3-beta-glucuronosyltransferase 3 (B3GAT3) (Homo sapiens (Human)).